A 201-amino-acid polypeptide reads, in one-letter code: Ras-related protein Rab-1C (201 aa).

Positions 1 to 20 are disordered; that stretch reads MGCSPSKEGNGSFSSTSTSF. Residue Gly2 is the site of N-myristoyl glycine attachment. Cys3 carries the S-palmitoyl cysteine lipid modification. GTP contacts are provided by residues 40 to 48, 58 to 65, 88 to 92, 146 to 149, and 176 to 178; these read GDSGVGKSC, FTDSYIST, DTAGQ, NKCD, and SAK. The Effector region signature appears at 62–70; the sequence is YISTIGVDF.

It belongs to the small GTPase superfamily. Rab family. In terms of processing, although this sequence lacks the C-terminal cysteine motifs subject to isoprenylation in other Rab proteins, it does have N-terminal myristoylation and S-palmitoylation sequence motifs.

The polypeptide is Ras-related protein Rab-1C (Rab1C) (Dictyostelium discoideum (Social amoeba)).